The sequence spans 480 residues: NADH-quinone oxidoreductase subunit N (480 aa).

A run of 13 helical transmembrane segments spans residues 11–31, 38–58, 74–94, 109–129, 163–183, 200–220, 239–259, 273–293, 301–321, 329–349, 372–392, 405–425, and 451–471; these read VIPE…DLFV, ITYG…IALA, GLSD…FLYS, YVLG…YSFL, FILG…LYGI, GAGL…GLAF, PTSV…AIIM, WQGM…VVAI, MLAY…LAGT, LFYT…IILL, FAFI…TVGF, VEMI…AFYY, and VVLS…GLLM.

The protein belongs to the complex I subunit 2 family. NDH-1 is composed of 14 different subunits. Subunits NuoA, H, J, K, L, M, N constitute the membrane sector of the complex.

The protein resides in the cell inner membrane. It catalyses the reaction a quinone + NADH + 5 H(+)(in) = a quinol + NAD(+) + 4 H(+)(out). NDH-1 shuttles electrons from NADH, via FMN and iron-sulfur (Fe-S) centers, to quinones in the respiratory chain. The immediate electron acceptor for the enzyme in this species is believed to be ubiquinone. Couples the redox reaction to proton translocation (for every two electrons transferred, four hydrogen ions are translocated across the cytoplasmic membrane), and thus conserves the redox energy in a proton gradient. In Thioalkalivibrio sulfidiphilus (strain HL-EbGR7), this protein is NADH-quinone oxidoreductase subunit N.